A 440-amino-acid chain; its full sequence is Tyrosine--tRNA ligase (440 aa).

Tyr46 lines the L-tyrosine pocket. A 'HIGH' region motif is present at residues 51 to 60 (PTAASLHIGN). L-tyrosine contacts are provided by Tyr181 and Gln185. The 'KMSKS' region motif lies at 241-245 (KFGKS). An ATP-binding site is contributed by Lys244. The 67-residue stretch at 373–439 (DRVIDAAQAA…GKKALGAVEN (67 aa)) folds into the S4 RNA-binding domain.

Belongs to the class-I aminoacyl-tRNA synthetase family. TyrS type 1 subfamily. As to quaternary structure, homodimer.

Its subcellular location is the cytoplasm. It catalyses the reaction tRNA(Tyr) + L-tyrosine + ATP = L-tyrosyl-tRNA(Tyr) + AMP + diphosphate + H(+). In terms of biological role, catalyzes the attachment of tyrosine to tRNA(Tyr) in a two-step reaction: tyrosine is first activated by ATP to form Tyr-AMP and then transferred to the acceptor end of tRNA(Tyr). The sequence is that of Tyrosine--tRNA ligase from Bifidobacterium longum subsp. infantis (strain ATCC 15697 / DSM 20088 / JCM 1222 / NCTC 11817 / S12).